We begin with the raw amino-acid sequence, 264 residues long: 3-methyl-2-oxobutanoate hydroxymethyltransferase (264 aa).

Mg(2+) contacts are provided by Asp-45 and Asp-84. 3-methyl-2-oxobutanoate contacts are provided by residues 45–46 (DS), Asp-84, and Lys-112. Glu-114 contributes to the Mg(2+) binding site. Glu-181 serves as the catalytic Proton acceptor.

Belongs to the PanB family. As to quaternary structure, homodecamer; pentamer of dimers. Requires Mg(2+) as cofactor.

It is found in the cytoplasm. The enzyme catalyses 3-methyl-2-oxobutanoate + (6R)-5,10-methylene-5,6,7,8-tetrahydrofolate + H2O = 2-dehydropantoate + (6S)-5,6,7,8-tetrahydrofolate. It functions in the pathway cofactor biosynthesis; (R)-pantothenate biosynthesis; (R)-pantoate from 3-methyl-2-oxobutanoate: step 1/2. Catalyzes the reversible reaction in which hydroxymethyl group from 5,10-methylenetetrahydrofolate is transferred onto alpha-ketoisovalerate to form ketopantoate. The protein is 3-methyl-2-oxobutanoate hydroxymethyltransferase of Cronobacter sakazakii (strain ATCC BAA-894) (Enterobacter sakazakii).